The sequence spans 153 residues: MNKELRAKTNEELIQLVTQLKGRLLEYRFKLAQGELDKTHIIKETRQTLARVLTILTERDVKVNVNAMVSSFVKEQTKQKEIQESVKKIKQLRVAKLKQNKEKRLANAEKVKAAPKPEQKTKKVKKAPKKTETVKPTTNKNKKNVKAKTKKKG.

A large ribosomal subunit protein uL29 region spans residues 1-83; the sequence is MNKELRAKTN…KEQTKQKEIQ (83 aa). The tract at residues 84 to 153 is unknown; the sequence is ESVKKIKQLR…NVKAKTKKKG (70 aa). The span at 100–121 shows a compositional bias: basic and acidic residues; that stretch reads NKEKRLANAEKVKAAPKPEQKT. A disordered region spans residues 100 to 153; sequence NKEKRLANAEKVKAAPKPEQKTKKVKKAPKKTETVKPTTNKNKKNVKAKTKKKG. The segment covering 140 to 153 has biased composition (basic residues); it reads KNKKNVKAKTKKKG.

It belongs to the universal ribosomal protein uL29 family.

The sequence is that of Large ribosomal subunit protein uL29 from Mycoplasmoides gallisepticum (strain R(low / passage 15 / clone 2)) (Mycoplasma gallisepticum).